The chain runs to 659 residues: Protein phosphatase Slingshot homolog 3 (659 aa).

Positions 1-16 (MALVTVSRSPPGSGAS) are enriched in polar residues. The disordered stretch occupies residues 1-31 (MALVTVSRSPPGSGASTPVGPWDQAVQRRSR). Position 2 is an N-acetylalanine (Ala2). Phosphoserine is present on residues Ser9 and Ser37. Residues 46-96 (LGLQDGGDNDDAAEASSEPTEKAPSEEELHGDQTDFGQGSQSPQKQEEQRQ) form a disordered region. Residues 64 to 78 (PTEKAPSEEELHGDQ) show a composition bias toward basic and acidic residues. Residues 80–89 (DFGQGSQSPQ) show a composition bias toward polar residues. Ser85 and Ser87 each carry phosphoserine. The DEK-C domain occupies 269 to 324 (EQMEQAIRAELWKVLDVSDLESVTSKEIRQALELRLGLPLQQYRDFIDNQMLLLVA). One can recognise a Tyrosine-protein phosphatase domain in the interval 328–469 (RASRIFPHLY…LQIYQGILTA (142 aa)). Residue Cys413 is the Phosphocysteine intermediate of the active site. Disordered regions lie at residues 482–534 (GVSP…RINL), 547–603 (SLEL…RQSV), and 617–638 (QAFQEQEQGQGQGQGEPCISST). Residues 547-557 (SLELESTSETS) are compositionally biased toward low complexity.

It belongs to the protein-tyrosine phosphatase family. Does not bind to, or colocalize with, filamentous actin.

The protein localises to the cytoplasm. Its subcellular location is the cytoskeleton. It is found in the nucleus. The enzyme catalyses O-phospho-L-tyrosyl-[protein] + H2O = L-tyrosyl-[protein] + phosphate. It catalyses the reaction O-phospho-L-seryl-[protein] + H2O = L-seryl-[protein] + phosphate. The catalysed reaction is O-phospho-L-threonyl-[protein] + H2O = L-threonyl-[protein] + phosphate. Protein phosphatase which may play a role in the regulation of actin filament dynamics. Can dephosphorylate and activate the actin binding/depolymerizing factor cofilin, which subsequently binds to actin filaments and stimulates their disassembly. The polypeptide is Protein phosphatase Slingshot homolog 3 (SSH3) (Homo sapiens (Human)).